A 322-amino-acid polypeptide reads, in one-letter code: Pyridoxal kinase (322 aa).

M1 is modified (N-acetylmethionine). The pyridoxal site is built by S22 and T57. T57 serves as a coordination point for pyridoxal 5'-phosphate. S69 carries the post-translational modification Phosphoserine. D123 serves as a coordination point for ATP. Position 123 (D123) interacts with Na(+). A Mg(2+)-binding site is contributed by D128. T158 is a Na(+) binding site. Residue 160–163 coordinates ATP; that stretch reads NQFE. Position 174 is a phosphoserine (S174). T196 contacts Na(+). 196–197 lines the ATP pocket; that stretch reads TS. S223 bears the Phosphoserine mark. ATP is bound by residues 236–238 and T243; that span reads VDA. 244-245 serves as a coordination point for pyridoxal 5'-phosphate; it reads GD. Catalysis depends on D245, which acts as the Proton acceptor. At S295 the chain carries Phosphoserine.

This sequence belongs to the pyridoxine kinase family. As to quaternary structure, homodimer. Requires Zn(2+) as cofactor. Mg(2+) serves as cofactor. Post-translationally, the N-terminus is blocked.

The protein localises to the cytoplasm. It localises to the cytosol. The enzyme catalyses pyridoxal + ATP = pyridoxal 5'-phosphate + ADP + H(+). It catalyses the reaction pyridoxamine + ATP = pyridoxamine 5'-phosphate + ADP + H(+). It carries out the reaction pyridoxine + ATP = pyridoxine 5'-phosphate + ADP + H(+). It participates in cofactor metabolism; pyridoxal 5'-phosphate salvage; pyridoxal 5'-phosphate from pyridoxal: step 1/1. It functions in the pathway cofactor metabolism; pyridoxal 5'-phosphate salvage; pyridoxine 5'-phosphate from pyridoxine: step 1/1. The protein operates within cofactor metabolism; pyridoxal 5'-phosphate salvage; pyridoxamine 5'-phosphate from pyridoxamine: step 1/1. Activity is increased in the presence of K(+)or Na(+). Catalyzes the phosphorylation of the dietary vitamin B6 vitamers pyridoxal (PL), pyridoxine (PN) and pyridoxamine (PM) to form pyridoxal 5'-phosphate (PLP), pyridoxine 5'-phosphate (PNP) and pyridoxamine 5'-phosphate (PMP), respectively. PLP is the active form of vitamin B6, and acts as a cofactor for over 140 different enzymatic reactions. The protein is Pyridoxal kinase (PDXK) of Sus scrofa (Pig).